Consider the following 563-residue polypeptide: Grainyhead-like protein 1 homolog (563 aa).

One can recognise a Grh/CP2 DB domain in the interval 194–428 (NNLGFQYVLE…ELDKPAALFI (235 aa)). Interaction with DNA regions lie at residues 326–335 (TDFSTQKGVK) and 372–375 (RKLR). The tract at residues 377-405 (EDKRAQKRKVQEYTAGALPGGRKKSDGEY) is disordered.

The protein belongs to the grh/CP2 family. Grainyhead subfamily.

The protein localises to the nucleus. Probable transcription factor. Binds a motif with the core sequence 5'-C[ACT][TG]G-3' in regulatory elements of target genes. Many putative target genes show oscillating expression levels, perhaps as a result of rhythmic variation in accumulation of grh-1. Plays a role in proper cuticle formation and/or barrier function and is required repetitively during development, for successful completion of each molt. Involved in modulating lifespan. Plays a role in defense response to bacteria. May act upstream of the p38 MAP kinase / pmk-1 pathway. May act downstream of the insulin/IGF-1 receptor signaling (IIS) pathway. The chain is Grainyhead-like protein 1 homolog from Caenorhabditis elegans.